Reading from the N-terminus, the 553-residue chain is Membrane protein insertase YidC (553 aa).

Residues isoleucine 3–tryptophan 23 form a helical membrane-spanning segment. The tract at residues alanine 44–alanine 64 is disordered. The next 4 helical transmembrane spans lie at leucine 359–phenylalanine 379, leucine 429–leucine 449, leucine 467–glutamine 487, and proline 507–valine 527.

It belongs to the OXA1/ALB3/YidC family. Type 1 subfamily. In terms of assembly, interacts with the Sec translocase complex via SecD. Specifically interacts with transmembrane segments of nascent integral membrane proteins during membrane integration.

Its subcellular location is the cell inner membrane. Its function is as follows. Required for the insertion and/or proper folding and/or complex formation of integral membrane proteins into the membrane. Involved in integration of membrane proteins that insert both dependently and independently of the Sec translocase complex, as well as at least some lipoproteins. Aids folding of multispanning membrane proteins. The chain is Membrane protein insertase YidC from Ralstonia nicotianae (strain ATCC BAA-1114 / GMI1000) (Ralstonia solanacearum).